Reading from the N-terminus, the 512-residue chain is ATP synthase subunit alpha (512 aa).

169 to 176 (GDRQTGKT) contacts ATP.

This sequence belongs to the ATPase alpha/beta chains family. As to quaternary structure, F-type ATPases have 2 components, CF(1) - the catalytic core - and CF(0) - the membrane proton channel. CF(1) has five subunits: alpha(3), beta(3), gamma(1), delta(1), epsilon(1). CF(0) has three main subunits: a(1), b(2) and c(9-12). The alpha and beta chains form an alternating ring which encloses part of the gamma chain. CF(1) is attached to CF(0) by a central stalk formed by the gamma and epsilon chains, while a peripheral stalk is formed by the delta and b chains.

It is found in the cell membrane. It carries out the reaction ATP + H2O + 4 H(+)(in) = ADP + phosphate + 5 H(+)(out). Produces ATP from ADP in the presence of a proton gradient across the membrane. The alpha chain is a regulatory subunit. The protein is ATP synthase subunit alpha of Buchnera aphidicola subsp. Acyrthosiphon pisum (strain 5A).